The sequence spans 455 residues: Ribulose bisphosphate carboxylase large chain (455 aa).

Lysine 5 is modified (N6,N6,N6-trimethyllysine). Residues asparagine 114 and threonine 164 each contribute to the substrate site. The active-site Proton acceptor is lysine 166. Residue lysine 168 coordinates substrate. Positions 192, 194, and 195 each coordinate Mg(2+). Lysine 192 carries the post-translational modification N6-carboxylysine. Catalysis depends on histidine 285, which acts as the Proton acceptor. Substrate is bound by residues arginine 286, histidine 318, and serine 370.

This sequence belongs to the RuBisCO large chain family. Type I subfamily. Heterohexadecamer of 8 large chains and 8 small chains; disulfide-linked. The disulfide link is formed within the large subunit homodimers. The cofactor is Mg(2+). In terms of processing, the disulfide bond which can form in the large chain dimeric partners within the hexadecamer appears to be associated with oxidative stress and protein turnover.

The protein localises to the plastid. Its subcellular location is the chloroplast. It carries out the reaction 2 (2R)-3-phosphoglycerate + 2 H(+) = D-ribulose 1,5-bisphosphate + CO2 + H2O. It catalyses the reaction D-ribulose 1,5-bisphosphate + O2 = 2-phosphoglycolate + (2R)-3-phosphoglycerate + 2 H(+). RuBisCO catalyzes two reactions: the carboxylation of D-ribulose 1,5-bisphosphate, the primary event in carbon dioxide fixation, as well as the oxidative fragmentation of the pentose substrate in the photorespiration process. Both reactions occur simultaneously and in competition at the same active site. This chain is Ribulose bisphosphate carboxylase large chain, found in Lupinus paraguariensis (Lupine).